The following is a 693-amino-acid chain: MKFTEHLSAHITPEWRKQYIQYEAFKEMLYSAQDQAPSIEVTDEDTVKRYYAKFEEKFFQTCEKELAKINTFYSEKLAEAQRRFATLQNELQSSLDAQRESSRAAGLRHRRTVFHLSQQERCKHRNIKDLQLAFSEFYLSLILLQNYQNLNFTGFRKILKKHDKIFETSRGADWRVAHVEVAPFYTCKKITQLISETETLVTTELEGGDRQKAMKRLRVPPLGAAQPAPAWTTFRVGLYCGVFVALTVTVIIAGVVKLVEHFGDNTDVWPLIRIYRGGFLLIEFLFLLGINTYGWRQAGVNHVLIFELNPRNNLSHQHLFEIAGFLGVLWCVSILSCLFAENTLIPIHMNPLALYGFFFLFLINPLKTCYYKSRFWLLKLLFRVVTAPFHRVGFADFWLADQLNSLVVVLMDLEYMICFYSLELNWTMSEGELWIKEGERICYSYSYGVRAVIKCLPAWFRFVQCLRRYRDTKRAFPHLVNAGKYSTTFFVVIFEALFKTHSGDERFVFLYIMIACRIVNSCYTLLWDLKMDWGLFDRNAGENTLLREEIVYPQKAYYYCAIVEDVILRFAWTIPLSLEVVYDRPVISNILGTVLPPLEVFRRFVWNFFRLENEHLNNCGEFRAVRDISVAPLNADDQTLLEQMMDQEDGVRNRLGKKNWKRSYSMSLRRPRLSSQSKVRDTKVLIEDTDDDT.

One can recognise an SPX domain in the interval 1–176 (MKFTEHLSAH…ETSRGADWRV (176 aa)). Residues 1–235 (MKFTEHLSAH…QPAPAWTTFR (235 aa)) lie on the Cytoplasmic side of the membrane. An important for inositol polyphosphate binding region spans residues 157 to 164 (KILKKHDK). Residues 236–256 (VGLYCGVFVALTVTVIIAGVV) form a helical membrane-spanning segment. At 257–267 (KLVEHFGDNTD) the chain is on the extracellular side. The helical transmembrane segment at 268-288 (VWPLIRIYRGGFLLIEFLFLL) threads the bilayer. The Cytoplasmic portion of the chain corresponds to 289–318 (GINTYGWRQAGVNHVLIFELNPRNNLSHQH). Residues 319-339 (LFEIAGFLGVLWCVSILSCLF) form a helical membrane-spanning segment. Residues 340–342 (AEN) are Extracellular-facing. The chain crosses the membrane as a helical span at residues 343 to 363 (TLIPIHMNPLALYGFFFLFLI). Residues 364–405 (NPLKTCYYKSRFWLLKLLFRVVTAPFHRVGFADFWLADQLNS) are Cytoplasmic-facing. Residues 406–426 (LVVVLMDLEYMICFYSLELNW) traverse the membrane as a helical segment. Residues 427 to 477 (TMSEGELWIKEGERICYSYSYGVRAVIKCLPAWFRFVQCLRRYRDTKRAFP) lie on the Extracellular side of the membrane. Positions 441-642 (ICYSYSYGVR…LNADDQTLLE (202 aa)) constitute an EXS domain. Residues 478 to 498 (HLVNAGKYSTTFFVVIFEALF) traverse the membrane as a helical segment. Residues 499 to 506 (KTHSGDER) lie on the Cytoplasmic side of the membrane. Residues 507–527 (FVFLYIMIACRIVNSCYTLLW) traverse the membrane as a helical segment. Residues 528-560 (DLKMDWGLFDRNAGENTLLREEIVYPQKAYYYC) lie on the Extracellular side of the membrane. A helical transmembrane segment spans residues 561-581 (AIVEDVILRFAWTIPLSLEVV). The Cytoplasmic portion of the chain corresponds to 582–693 (YDRPVISNIL…VLIEDTDDDT (112 aa)). Residues 674–693 (SSQSKVRDTKVLIEDTDDDT) form a disordered region.

It belongs to the SYG1 (TC 2.A.94) family.

The protein localises to the cell membrane. Its function is as follows. Plays a role in phosphate homeostasis. Mediates phosphate export from the cell. Binds inositol hexakisphosphate (Ins6P) and similar inositol polyphosphates, such as 5-diphospho-inositol pentakisphosphate (5-InsP7); these are important intracellular signaling molecules. This Danio rerio (Zebrafish) protein is Xenotropic and polytropic retrovirus receptor 1 homolog (xpr1).